The sequence spans 301 residues: Sulfate adenylyltransferase subunit 2 (301 aa).

A disordered region spans residues 282-301 (RLIDRDEAGSMEKKKREGYF).

The protein belongs to the PAPS reductase family. CysD subfamily. As to quaternary structure, heterodimer composed of CysD, the smaller subunit, and CysN.

It carries out the reaction sulfate + ATP + H(+) = adenosine 5'-phosphosulfate + diphosphate. It functions in the pathway sulfur metabolism; hydrogen sulfide biosynthesis; sulfite from sulfate: step 1/3. With CysN forms the ATP sulfurylase (ATPS) that catalyzes the adenylation of sulfate producing adenosine 5'-phosphosulfate (APS) and diphosphate, the first enzymatic step in sulfur assimilation pathway. APS synthesis involves the formation of a high-energy phosphoric-sulfuric acid anhydride bond driven by GTP hydrolysis by CysN coupled to ATP hydrolysis by CysD. The polypeptide is Sulfate adenylyltransferase subunit 2 (Chelativorans sp. (strain BNC1)).